Reading from the N-terminus, the 340-residue chain is Ferrochelatase (340 aa).

2 residues coordinate Fe cation: histidine 189 and glutamate 292.

This sequence belongs to the ferrochelatase family.

It is found in the cytoplasm. The enzyme catalyses heme b + 2 H(+) = protoporphyrin IX + Fe(2+). The protein operates within porphyrin-containing compound metabolism; protoheme biosynthesis; protoheme from protoporphyrin-IX: step 1/1. Functionally, catalyzes the ferrous insertion into protoporphyrin IX. In Pseudomonas fluorescens (strain ATCC BAA-477 / NRRL B-23932 / Pf-5), this protein is Ferrochelatase.